The following is a 162-amino-acid chain: B-box zinc finger protein 23 (162 aa).

Zn(2+) contacts are provided by cysteine 5, cysteine 8, cysteine 28, histidine 33, cysteine 63, cysteine 66, cysteine 86, and histidine 91. The B box-type 1; atypical zinc-finger motif lies at 5–47 (CEVCEKAEAEVLCCSDEAVLCKPCDIKVHEANKLFQRHHRVAL). A B box-type 2; atypical zinc finger spans residues 63–101 (CDICQERKGYFFCLEDRAMLCNDCDEAIHTCNSHQRFLL). The segment at 137–162 (QYSSEETEAGNSGEIVHKNPSVILSP) is disordered.

It is found in the nucleus. Functionally, probable transcription factor that may be involved in seedling photomorphogenesis. The protein is B-box zinc finger protein 23 of Arabidopsis thaliana (Mouse-ear cress).